A 504-amino-acid chain; its full sequence is Catalase (504 aa).

Residues 1–25 (MSKQDGKLTGLFGAPVSDRENSMTA) are disordered. Catalysis depends on residues His56 and Asn129. Tyr339 contributes to the heme binding site.

This sequence belongs to the catalase family. As to quaternary structure, homodimer. Heme is required as a cofactor.

It carries out the reaction 2 H2O2 = O2 + 2 H2O. Its function is as follows. Decomposes hydrogen peroxide into water and oxygen; serves to protect cells from the toxic effects of hydrogen peroxide. This chain is Catalase (katA), found in Staphylococcus epidermidis (strain ATCC 35984 / DSM 28319 / BCRC 17069 / CCUG 31568 / BM 3577 / RP62A).